The following is a 379-amino-acid chain: Alkanesulfonate monooxygenase (379 aa).

This sequence belongs to the SsuD family.

It catalyses the reaction an alkanesulfonate + FMNH2 + O2 = an aldehyde + FMN + sulfite + H2O + 2 H(+). Its function is as follows. Catalyzes the desulfonation of aliphatic sulfonates. The polypeptide is Alkanesulfonate monooxygenase (Pseudomonas syringae pv. tomato (strain ATCC BAA-871 / DC3000)).